A 419-amino-acid polypeptide reads, in one-letter code: MSQDNNFSQGPVPQSARKGVLALTFVMLGLTFFSASMWTGGTLGTGLSYHDFFLAVLIGNLLLGIYTSFLGYIGAKTGLTTHLLARFSFGVKGSWLPSLLLGGTQVGWFGVGVAMFAIPVGKATGLDINLLIAVSGLLMTVTVFFGISALTVLSVIAVPAIACLGGYSVWLAVNGMGGLDALKAVVPAQPLDFNVALALVVGSFISAGTLTADFVRFGRNAKLAVLVAMVAFFLGNSLMFIFGAAGAAALGMADISDVMIAQGLLLPAIVVLGLNIWTTNDNALYASGLGFANITGMSSKTLSVINGIIGTVCALWLYNNFVGWLTFLSAAIPPVGGVIIADYLMNRRRYEHFATTRMMSVNWVAILAVALGIAAGHWLPGIVPVNAVLGGALSYLILNPILNRKTTAAMTHVEANSVE.

Topologically, residues 1-19 (MSQDNNFSQGPVPQSARKG) are cytoplasmic. The chain crosses the membrane as a helical span at residues 20-39 (VLALTFVMLGLTFFSASMWT). The Periplasmic segment spans residues 40–51 (GGTLGTGLSYHD). A helical transmembrane segment spans residues 52-71 (FFLAVLIGNLLLGIYTSFLG). Topologically, residues 72 to 100 (YIGAKTGLTTHLLARFSFGVKGSWLPSLL) are cytoplasmic. A helical membrane pass occupies residues 101-120 (LGGTQVGWFGVGVAMFAIPV). The Periplasmic segment spans residues 121–127 (GKATGLD). Residues 128–147 (INLLIAVSGLLMTVTVFFGI) traverse the membrane as a helical segment. The Cytoplasmic portion of the chain corresponds to 148–152 (SALTV). The helical transmembrane segment at 153–172 (LSVIAVPAIACLGGYSVWLA) threads the bilayer. Topologically, residues 173-192 (VNGMGGLDALKAVVPAQPLD) are periplasmic. The helical transmembrane segment at 193–212 (FNVALALVVGSFISAGTLTA) threads the bilayer. Residues 213-221 (DFVRFGRNA) are Cytoplasmic-facing. The helical transmembrane segment at 222 to 242 (KLAVLVAMVAFFLGNSLMFIF) threads the bilayer. The Periplasmic portion of the chain corresponds to 243–257 (GAAGAAALGMADISD). Residues 258 to 277 (VMIAQGLLLPAIVVLGLNIW) traverse the membrane as a helical segment. The Cytoplasmic segment spans residues 278–300 (TTNDNALYASGLGFANITGMSSK). A helical membrane pass occupies residues 301–320 (TLSVINGIIGTVCALWLYNN). Phe-321 is a topological domain (periplasmic). Residues 322 to 341 (VGWLTFLSAAIPPVGGVIIA) traverse the membrane as a helical segment. Residues 342 to 358 (DYLMNRRRYEHFATTRM) lie on the Cytoplasmic side of the membrane. The chain crosses the membrane as a helical span at residues 359–378 (MSVNWVAILAVALGIAAGHW). At 379-380 (LP) the chain is on the periplasmic side. The helical transmembrane segment at 381–400 (GIVPVNAVLGGALSYLILNP) threads the bilayer. The Cytoplasmic portion of the chain corresponds to 401–419 (ILNRKTTAAMTHVEANSVE).

This sequence belongs to the purine-cytosine permease (2.A.39) family.

It is found in the cell inner membrane. In terms of biological role, required for cytosine transport into the cell. The polypeptide is Cytosine permease (codB) (Escherichia coli O6:H1 (strain CFT073 / ATCC 700928 / UPEC)).